We begin with the raw amino-acid sequence, 377 residues long: Succinyl-diaminopimelate desuccinylase (377 aa).

Position 68 (H68) interacts with Zn(2+). D70 is a catalytic residue. D101 lines the Zn(2+) pocket. The Proton acceptor role is filled by E135. 3 residues coordinate Zn(2+): E136, E164, and H350.

The protein belongs to the peptidase M20A family. DapE subfamily. As to quaternary structure, homodimer. Zn(2+) is required as a cofactor. Co(2+) serves as cofactor.

It catalyses the reaction N-succinyl-(2S,6S)-2,6-diaminopimelate + H2O = (2S,6S)-2,6-diaminopimelate + succinate. The protein operates within amino-acid biosynthesis; L-lysine biosynthesis via DAP pathway; LL-2,6-diaminopimelate from (S)-tetrahydrodipicolinate (succinylase route): step 3/3. In terms of biological role, catalyzes the hydrolysis of N-succinyl-L,L-diaminopimelic acid (SDAP), forming succinate and LL-2,6-diaminopimelate (DAP), an intermediate involved in the bacterial biosynthesis of lysine and meso-diaminopimelic acid, an essential component of bacterial cell walls. In Aliivibrio fischeri (strain MJ11) (Vibrio fischeri), this protein is Succinyl-diaminopimelate desuccinylase.